The primary structure comprises 160 residues: Protein-export protein SecB (160 aa).

This sequence belongs to the SecB family. As to quaternary structure, homotetramer, a dimer of dimers. One homotetramer interacts with 1 SecA dimer.

The protein resides in the cytoplasm. Functionally, one of the proteins required for the normal export of preproteins out of the cell cytoplasm. It is a molecular chaperone that binds to a subset of precursor proteins, maintaining them in a translocation-competent state. It also specifically binds to its receptor SecA. The chain is Protein-export protein SecB from Burkholderia lata (strain ATCC 17760 / DSM 23089 / LMG 22485 / NCIMB 9086 / R18194 / 383).